Consider the following 224-residue polypeptide: Cytidylate kinase (224 aa).

9–17 (GPSGSGKGT) is a binding site for ATP.

It belongs to the cytidylate kinase family. Type 1 subfamily.

The protein resides in the cytoplasm. It catalyses the reaction CMP + ATP = CDP + ADP. The catalysed reaction is dCMP + ATP = dCDP + ADP. In Saccharophagus degradans (strain 2-40 / ATCC 43961 / DSM 17024), this protein is Cytidylate kinase.